The primary structure comprises 284 residues: 2-dehydro-3-deoxyphosphooctonate aldolase (284 aa).

The protein belongs to the KdsA family.

The protein resides in the cytoplasm. The catalysed reaction is D-arabinose 5-phosphate + phosphoenolpyruvate + H2O = 3-deoxy-alpha-D-manno-2-octulosonate-8-phosphate + phosphate. It participates in carbohydrate biosynthesis; 3-deoxy-D-manno-octulosonate biosynthesis; 3-deoxy-D-manno-octulosonate from D-ribulose 5-phosphate: step 2/3. The protein operates within bacterial outer membrane biogenesis; lipopolysaccharide biosynthesis. The sequence is that of 2-dehydro-3-deoxyphosphooctonate aldolase from Cronobacter sakazakii (strain ATCC BAA-894) (Enterobacter sakazakii).